Consider the following 337-residue polypeptide: Ketol-acid reductoisomerase (NADP(+)) (337 aa).

Residues 1 to 183 (MAIETLYDSD…GGARAGVIPT (183 aa)) enclose the KARI N-terminal Rossmann domain. Residues 26–29 (YGSQ), arginine 49, serine 52, serine 54, and 84–87 (DTSQ) each bind NADP(+). Histidine 109 is an active-site residue. Position 135 (glycine 135) interacts with NADP(+). A KARI C-terminal knotted domain is found at 184-329 (TFKDETETDL…SQLRDLMSWV (146 aa)). Positions 192, 196, 228, and 232 each coordinate Mg(2+). Substrate is bound at residue serine 253.

Belongs to the ketol-acid reductoisomerase family. Requires Mg(2+) as cofactor.

It catalyses the reaction (2R)-2,3-dihydroxy-3-methylbutanoate + NADP(+) = (2S)-2-acetolactate + NADPH + H(+). The catalysed reaction is (2R,3R)-2,3-dihydroxy-3-methylpentanoate + NADP(+) = (S)-2-ethyl-2-hydroxy-3-oxobutanoate + NADPH + H(+). Its pathway is amino-acid biosynthesis; L-isoleucine biosynthesis; L-isoleucine from 2-oxobutanoate: step 2/4. It participates in amino-acid biosynthesis; L-valine biosynthesis; L-valine from pyruvate: step 2/4. In terms of biological role, involved in the biosynthesis of branched-chain amino acids (BCAA). Catalyzes an alkyl-migration followed by a ketol-acid reduction of (S)-2-acetolactate (S2AL) to yield (R)-2,3-dihydroxy-isovalerate. In the isomerase reaction, S2AL is rearranged via a Mg-dependent methyl migration to produce 3-hydroxy-3-methyl-2-ketobutyrate (HMKB). In the reductase reaction, this 2-ketoacid undergoes a metal-dependent reduction by NADPH to yield (R)-2,3-dihydroxy-isovalerate. The sequence is that of Ketol-acid reductoisomerase (NADP(+)) from Corynebacterium aurimucosum (strain ATCC 700975 / DSM 44827 / CIP 107346 / CN-1) (Corynebacterium nigricans).